The chain runs to 299 residues: uncharacterized protein (299 aa).

Residues 1 to 10 (MTSIIQSPPL) show a composition bias toward polar residues. Disordered stretches follow at residues 1-30 (MTSI…NNNN), 54-89 (KLNN…INNN), and 148-212 (QDYT…SDYV). Over residues 56–89 (NNNNNNNNNNNNNNNNNNNNNNNNSSSNNNINNN) the composition is skewed to low complexity. 2 stretches are compositionally biased toward acidic residues: residues 150-169 (YTDE…DEEE) and 177-212 (ECEE…SDYV).

This is an uncharacterized protein from Dictyostelium discoideum (Social amoeba).